A 368-amino-acid polypeptide reads, in one-letter code: Probable replication factor C subunit 5 (368 aa).

An ATP-binding site is contributed by 69 to 76 (GPPGTGKT).

The protein belongs to the activator 1 small subunits family. In terms of assembly, heteropentamer of various rfc subunits that forms a complex (RFC) with PCNA in the presence of ATP.

The protein localises to the nucleus. Its function is as follows. The elongation of primed DNA templates by DNA polymerase delta and epsilon requires the action of the accessory proteins proliferating cell nuclear antigen (PCNA) and activator 1. This chain is Probable replication factor C subunit 5, found in Caenorhabditis elegans.